The primary structure comprises 702 residues: Methionine--tRNA ligase (702 aa).

The short motif at 14–24 (PYANGPVHLGH) is the 'HIGH' region element. Zn(2+) is bound by residues Cys146, Cys149, Cys159, and Cys162. A 'KMSKS' region motif is present at residues 344-348 (KFSKS). Position 347 (Lys347) interacts with ATP. The 102-residue stretch at 601–702 (DFLKVDLRVA…GDEINGQQIQ (102 aa)) folds into the tRNA-binding domain.

This sequence belongs to the class-I aminoacyl-tRNA synthetase family. MetG type 1 subfamily. Homodimer. Zn(2+) serves as cofactor.

It is found in the cytoplasm. It catalyses the reaction tRNA(Met) + L-methionine + ATP = L-methionyl-tRNA(Met) + AMP + diphosphate. Functionally, is required not only for elongation of protein synthesis but also for the initiation of all mRNA translation through initiator tRNA(fMet) aminoacylation. This is Methionine--tRNA ligase from Chlorobium limicola (strain DSM 245 / NBRC 103803 / 6330).